A 497-amino-acid polypeptide reads, in one-letter code: UDP-N-acetylmuramoyl-L-alanyl-D-glutamate--2,6-diaminopimelate ligase (497 aa).

Position 29 (S29) interacts with UDP-N-acetyl-alpha-D-muramoyl-L-alanyl-D-glutamate. An ATP-binding site is contributed by 116–122; sequence GTNGKTT. UDP-N-acetyl-alpha-D-muramoyl-L-alanyl-D-glutamate is bound by residues N157, 158-159, S185, Q191, and R193; that span reads TT. K225 bears the N6-carboxylysine mark. Meso-2,6-diaminopimelate is bound by residues R392, 416-419, G467, and E471; that span reads DNPR. Residues 416–419 carry the Meso-diaminopimelate recognition motif motif; it reads DNPR.

This sequence belongs to the MurCDEF family. MurE subfamily. Mg(2+) serves as cofactor. Post-translationally, carboxylation is probably crucial for Mg(2+) binding and, consequently, for the gamma-phosphate positioning of ATP.

The protein localises to the cytoplasm. It catalyses the reaction UDP-N-acetyl-alpha-D-muramoyl-L-alanyl-D-glutamate + meso-2,6-diaminopimelate + ATP = UDP-N-acetyl-alpha-D-muramoyl-L-alanyl-gamma-D-glutamyl-meso-2,6-diaminopimelate + ADP + phosphate + H(+). It functions in the pathway cell wall biogenesis; peptidoglycan biosynthesis. Catalyzes the addition of meso-diaminopimelic acid to the nucleotide precursor UDP-N-acetylmuramoyl-L-alanyl-D-glutamate (UMAG) in the biosynthesis of bacterial cell-wall peptidoglycan. This is UDP-N-acetylmuramoyl-L-alanyl-D-glutamate--2,6-diaminopimelate ligase from Buchnera aphidicola subsp. Acyrthosiphon pisum (strain APS) (Acyrthosiphon pisum symbiotic bacterium).